The following is a 132-amino-acid chain: Large ribosomal subunit protein bL17 (132 aa).

The protein belongs to the bacterial ribosomal protein bL17 family. In terms of assembly, part of the 50S ribosomal subunit. Contacts protein L32.

The polypeptide is Large ribosomal subunit protein bL17 (Variovorax paradoxus (strain S110)).